Consider the following 658-residue polypeptide: DNA ligase (658 aa).

NAD(+)-binding positions include D32 to D36 and S81 to L82. The active-site N6-AMP-lysine intermediate is the K112. R133, E167, and K306 together coordinate NAD(+). Residues C400, C403, C416, and C421 each coordinate Zn(2+). In terms of domain architecture, BRCT spans E577–N658.

It belongs to the NAD-dependent DNA ligase family. LigA subfamily. Mg(2+) serves as cofactor. Mn(2+) is required as a cofactor.

It carries out the reaction NAD(+) + (deoxyribonucleotide)n-3'-hydroxyl + 5'-phospho-(deoxyribonucleotide)m = (deoxyribonucleotide)n+m + AMP + beta-nicotinamide D-nucleotide.. In terms of biological role, DNA ligase that catalyzes the formation of phosphodiester linkages between 5'-phosphoryl and 3'-hydroxyl groups in double-stranded DNA using NAD as a coenzyme and as the energy source for the reaction. It is essential for DNA replication and repair of damaged DNA. The protein is DNA ligase of Helicobacter pylori (strain G27).